A 119-amino-acid polypeptide reads, in one-letter code: Holo-[acyl-carrier-protein] synthase (119 aa).

2 residues coordinate Mg(2+): Asp-8 and Glu-58.

This sequence belongs to the P-Pant transferase superfamily. AcpS family. It depends on Mg(2+) as a cofactor.

It is found in the cytoplasm. The catalysed reaction is apo-[ACP] + CoA = holo-[ACP] + adenosine 3',5'-bisphosphate + H(+). Transfers the 4'-phosphopantetheine moiety from coenzyme A to a Ser of acyl-carrier-protein. The protein is Holo-[acyl-carrier-protein] synthase of Bacillus cereus (strain ATCC 14579 / DSM 31 / CCUG 7414 / JCM 2152 / NBRC 15305 / NCIMB 9373 / NCTC 2599 / NRRL B-3711).